The primary structure comprises 744 residues: Prestin (744 aa).

Topologically, residues 1-79 (MDHAEENEIP…WLPAYKFKEY (79 aa)) are cytoplasmic. Residues 80-105 (VLGDLVSGISTGVLQLPQGLAFAMLA) form a helical membrane-spanning segment. Residues 106–109 (AVPP) are Extracellular-facing. The helical transmembrane segment at 110-125 (VFGLYSSFYPVIMYCF) threads the bilayer. At 126-137 (FGTSRHISIGPF) the chain is on the cytoplasmic side. The helical transmembrane segment at 138-147 (AVISLMIGGV) threads the bilayer. The Extracellular portion of the chain corresponds to 148–178 (AVRLVPDDIVIPGGVNATNGTEARDALRVKV). An Involved in motor function motif is present at residues 158 to 168 (IPGGVNATNGT). N-linked (GlcNAc...) asparagine glycosylation is found at N163 and N166. A helical transmembrane segment spans residues 179–196 (AMSVTLLSGIIQFCLGVC). Residues 197–208 (RFGFVAIYLTEP) lie on the Cytoplasmic side of the membrane. Residues 209–230 (LVRGFTTAAAVHVFTSMLKYLF) form a helical membrane-spanning segment. At 231-243 (GVKTKRYSGIFSV) the chain is on the extracellular side. The helical intramembrane region spans 244-252 (VYSTVAVLQ). The Extracellular segment spans residues 253–258 (NVKNLN). Residues 259–282 (VCSLGVGLMVFGLLLGGKEFNERF) traverse the membrane as a helical segment. The Cytoplasmic portion of the chain corresponds to 283 to 291 (KEKLPAPIP). The helical transmembrane segment at 292-304 (LEFFAVVMGTGIS) threads the bilayer. The Extracellular segment spans residues 305–337 (AGFNLHESYSVDVVGTLPLGLLPPANPDTSLFH). The helical transmembrane segment at 338-361 (LVYVDAIAIAIVGFSVTISMAKTL) threads the bilayer. Residues 362 to 370 (ANKHGYQVD) lie on the Cytoplasmic side of the membrane. Residues 371–388 (GNQELIALGICNSIGSLF) traverse the membrane as a helical segment. The Extracellular segment spans residues 389–396 (QTFSISCS). A helical membrane pass occupies residues 397 to 406 (LSRSLVQEGT). Residue S398 coordinates salicylate. The Cytoplasmic portion of the chain corresponds to 407–410 (GGKT). A helical transmembrane segment spans residues 411–429 (QLAGCLASLMILLVILATG). The Extracellular segment spans residues 430–436 (FLFESLP). The helical transmembrane segment at 437–455 (QAVLSAIVIVNLKGMFMQF) threads the bilayer. Topologically, residues 456–469 (SDLPFFWRTSKIEL) are cytoplasmic. Residues 470–484 (TIWLTTFVSSLFLGL) traverse the membrane as a helical segment. A topological domain (extracellular) is located at residue D485. Residues 486–497 (YGLITAVIIALL) traverse the membrane as a helical segment. The Cytoplasmic portion of the chain corresponds to 498–744 (TVIYRTQSPS…PNATPTTPEA (247 aa)). The segment at 505–718 (SPSYKVLGQL…AVLGSHVREA (214 aa)) is extended region for STAS domain. The region spanning 525-713 (AYEEVKEIPG…HSIHDAVLGS (189 aa)) is the STAS domain. The disordered stretch occupies residues 717 to 744 (EAMAEQEASAPPPQDDMEPNATPTTPEA).

The protein belongs to the SLC26A/SulP transporter (TC 2.A.53) family. In terms of assembly, homodimer. Interacts (via STAS domain) with CALM; this interaction is calcium-dependent and the STAS domain interacts with only one lobe of CALM which is an elongated conformation. Interacts with MYH1. As to expression, highly expressed in mature outer hair cells, but not in inner hair cells or other cells of the basilar membrane and the organ of Corti.

The protein localises to the lateral cell membrane. The enzyme catalyses 2 hydrogencarbonate(in) + chloride(out) = 2 hydrogencarbonate(out) + chloride(in). Functionally, voltage-sensitive motor protein that drives outer hair cell (OHC) electromotility (eM) and participates in sound amplification in the hearing organ. Converts changes in the transmembrane electric potential into mechanical displacements resulting in the coupling of its expansion to movement of a charged voltage sensor across the lipid membrane. The nature of the voltage sensor is not completely clear, and two models compete. In the first model, acts as an incomplete transporter where intracellular chloride anion acts as extrinsic voltage sensor that drives conformational change in the protein which is sufficient to produce a length change in the plane of the membrane and hence in the length of the OHC. The second model in which multiple charged amino acid residues are distributed at the intracellular and extracellular membrane interfaces that form an intrinsic voltage sensor, whose movement produces the non-linear capacitance (NLC). However, the effective voltage sensor may be the result of a hybrid voltage sensor assembled from intrinsic charge (charged residues) and extrinsic charge (bound anion). Notably, binding of anions to the anion-binding pocket partially neutralizes the intrinsic positive charge rather than to form an electrically negative sensor, therefore remaining charge may serve as voltage sensor that, after depolarization, moves from down (expanded state) to up (contracted) conformation, which is accompanied by an eccentric contraction of the intermembrane cross-sectional area of the protein as well as a major increase in the hydrophobic thickness of the protein having as consequences the plasma membrane thickening and the cell contraction after membrane depolarization. The anion-binding pocket transits from the inward-open (Down) state, where it is exposed toward the intracellular solvent in the absence of anion, to the occluded (Up) state upon anion binding. Salicylate competes for the anion-binding site and inhibits the voltage-sensor movement, and therefore inhibits the charge transfer and electromotility by displacing Cl(-) from the anion-binding site and by preventing the structural transitions to the contracted state. In addition, can act as a weak Cl(-)/HCO3 (-) antiporter across the cell membrane and so regulate the intracellular pH of the outer hair cells (OHCs), while firstly found as being unable to mediate electrogenic anion transport. Moreover, supports a role in cardiac mechanical amplification serving as an elastic element to enhance the actomyosin- based sarcomere contraction system. The sequence is that of Prestin from Meriones unguiculatus (Mongolian jird).